The chain runs to 178 residues: Large ribosomal subunit protein bL25 (178 aa).

It belongs to the bacterial ribosomal protein bL25 family. CTC subfamily. Part of the 50S ribosomal subunit; part of the 5S rRNA/L5/L18/L25 subcomplex. Contacts the 5S rRNA. Binds to the 5S rRNA independently of L5 and L18.

This is one of the proteins that binds to the 5S RNA in the ribosome where it forms part of the central protuberance. The sequence is that of Large ribosomal subunit protein bL25 from Helicobacter pylori (strain J99 / ATCC 700824) (Campylobacter pylori J99).